Here is a 1477-residue protein sequence, read N- to C-terminus: FHA domain-containing protein PS1 (1477 aa).

Residues 64-115 (LVVGRHPDCDILLTHPSISRFHLEIRSISSRQKLFVTDLSSVHGTWVRDLRI) form the FHA domain. Disordered stretches follow at residues 188-218 (ENTT…DEDT), 588-644 (LGKA…PKSF), 789-818 (PNSF…DSEF), 832-911 (LNQK…LIGS), 942-979 (ALAA…RDDV), 1004-1030 (IRTN…KQAL), and 1159-1225 (VEQE…IRSS). Positions 589 to 607 (GKADIRSHEENGESEDSRQ) are enriched in basic and acidic residues. Residues 832 to 849 (LNQKRNGETKVSSRQASP) show a composition bias toward polar residues. Residues 870-883 (QSLCSSSQPPSESE) show a composition bias toward low complexity. 4 stretches are compositionally biased toward polar residues: residues 885-897 (NPAT…SGII), 957-971 (LSSS…QTPE), 1007-1018 (NKSQGKQKQTGR), and 1198-1212 (SSFQ…SSTA). The segment covering 1213 to 1225 (SARNNISRGIRSS) has biased composition (low complexity).

In terms of biological role, required for normal spindle orientation at male meiosis II and normal formation of tetrad of microspores. Not involved in female meiosis. The sequence is that of FHA domain-containing protein PS1 from Arabidopsis thaliana (Mouse-ear cress).